The chain runs to 77 residues: Putative antitoxin VapB24 (77 aa).

In terms of biological role, possibly the antitoxin component of a type II toxin-antitoxin (TA) system. Its cognate toxin is VapC24 (Potential). This chain is Putative antitoxin VapB24 (vapB24), found in Mycobacterium tuberculosis (strain CDC 1551 / Oshkosh).